The primary structure comprises 355 residues: Chemerin-like receptor 2 (355 aa).

The Extracellular segment spans residues 1–41 (MEDLEETLFEEFENYSYDLDYYSLESDLEEKVQLGVVHWVS). N-linked (GlcNAc...) asparagine glycosylation is present at Asn14. The helical transmembrane segment at 42–62 (LVLYCLAFVLGIPGNAIVIWF) threads the bilayer. At 63–73 (TGFKWKKTVTT) the chain is on the cytoplasmic side. The helical transmembrane segment at 74–94 (LWFLNLAIADFIFLLFLPLYI) threads the bilayer. At 95-112 (SYVAMNFHWPFGIWLCKA) the chain is on the extracellular side. A disulfide bond links Cys110 and Cys187. The helical transmembrane segment at 113–133 (NSFTAQLNMFASVFFLTVISL) threads the bilayer. Over 134-154 (DHYIHLIHPVLSHRHRTLKNS) the chain is Cytoplasmic. A helical membrane pass occupies residues 155–175 (LIVIIFIWLLASLIGGPALYF). Residues 176-210 (RDTVEFNNHTLCYNNFQKHDPDLTLIRHHVLTWVK) are Extracellular-facing. A helical membrane pass occupies residues 211–231 (FIIGYLFPLLTMSICYLCLIF). The Cytoplasmic segment spans residues 232–247 (KVKKRSILISSRHFWT). The helical transmembrane segment at 248-268 (ILVVVVAFVVCWTPYHLFSIW) threads the bilayer. Residues 269–286 (ELTIHHNSYSHHVMQAGI) are Extracellular-facing. Residues 287 to 307 (PLSTGLAFLNSCLNPILYVLI) traverse the membrane as a helical segment. Topologically, residues 308–355 (SKKFQARFRSSVAEILKYTLWEVSCSGTVSEQLRNSETKNLCLLETAQ) are cytoplasmic.

The protein belongs to the chemokine-like receptor (CMKLR) family. As to expression, expressed in hippocampus.

It localises to the cell membrane. In terms of biological role, receptor for chemoattractant adipokine chemerin/RARRES2 suggesting a role for this receptor in the regulation of inflammation and energy homesotasis. Signals mainly via beta-arrestin pathway. Binding of RARRES2 activates weakly G proteins, calcium mobilization and MAPK1/MAPK3 (ERK1/2) phosphorylation too. Also acts as a receptor for TAFA1, mediates its effects on neuronal stem-cell proliferation and differentiation via the activation of ROCK/ERK and ROCK/STAT3 signaling pathway. (Microbial infection) Coreceptor for HIV-1. The protein is Chemerin-like receptor 2 of Homo sapiens (Human).